Consider the following 275-residue polypeptide: MTSTSNLIEQVIEAWQNMQAKTPLVQCITNSVAANYTANVLLASGASPAMIDNPYEAESFTKISSALSINLGTPTSEQMQAMQISAKTAQLNNVPWVLDPVGYGPILAWRSQMTDELLQFKPSVIRGNASEISTLAGNQVQSKGVDSTLSSDQAYQQAFSLLTHASCIAISGESDYILSNEVDAVIQVNGGSPLQPKITATGCALGALIAAYSAVTTPTIAALSAHIHFAIAGKLAANQAQTMGSFSSIFMDYIHMLDANLIEQYADIKLLNKQA.

M50 is a binding site for substrate. The ATP site is built by R126 and S171. Residue A200 coordinates substrate.

It belongs to the Thz kinase family. Mg(2+) is required as a cofactor.

It carries out the reaction 5-(2-hydroxyethyl)-4-methylthiazole + ATP = 4-methyl-5-(2-phosphooxyethyl)-thiazole + ADP + H(+). It functions in the pathway cofactor biosynthesis; thiamine diphosphate biosynthesis; 4-methyl-5-(2-phosphoethyl)-thiazole from 5-(2-hydroxyethyl)-4-methylthiazole: step 1/1. Catalyzes the phosphorylation of the hydroxyl group of 4-methyl-5-beta-hydroxyethylthiazole (THZ). The protein is Hydroxyethylthiazole kinase of Acinetobacter baumannii (strain ATCC 17978 / DSM 105126 / CIP 53.77 / LMG 1025 / NCDC KC755 / 5377).